A 465-amino-acid polypeptide reads, in one-letter code: MATSHPDPTTSRHVAVIGAGAAGLVAARELRREGHSVVVLERGSQIGGVWAYTSQVEPDPLSLDPTRPVVHSSLYRSLRTNIPRECMGFTDFPFATRPHDGSRDPRRHPAHTEVLAYLRDFAKEFDIEEMVRFETEVVKAEQVAAEGEERGKWRVESRSSDGVVDEIYDAVVVCNGHYTEPRHALITGIDSWPGKQIHSHNYRVPDQFKDQVVIVIGSSASGVDICRDIAQVAKEVHVSSRSTSPDTYEKLTGYENLWLHSTIQIAREDGSVVFENGKTIYADTIMHCTGYKYYFPFLDTKGEVTVDDNRVGPLYKHVFPPALAPSLSFIGLPWQITPFPMFELQSKWVAAVLSGRVSLPSQDEMMEDTKAFYDKLEASGIPKRYTHLMPDDSQFEYDNWLADQCEYPRIEKWREQMFYIGFKRIYAQSSTYRDNWDDDHLIVEAYDDFVKFMSSYQELLPMLKT.

FAD is bound at residue 18–23 (GAGAAG). Position 217–222 (217–222 (GSSASG)) interacts with NADP(+).

The protein belongs to the FMO family. Requires FAD as cofactor.

In terms of biological role, catalyzes the conversion of methylthioalkyl glucosinolates of any chain length into methylsulfinylalkyl glucosinolates. This is Flavin-containing monooxygenase FMO GS-OX-like 2 from Arabidopsis thaliana (Mouse-ear cress).